We begin with the raw amino-acid sequence, 177 residues long: Large ribosomal subunit protein uL6 (177 aa).

It belongs to the universal ribosomal protein uL6 family. Part of the 50S ribosomal subunit.

This protein binds to the 23S rRNA, and is important in its secondary structure. It is located near the subunit interface in the base of the L7/L12 stalk, and near the tRNA binding site of the peptidyltransferase center. This Rhodospirillum centenum (strain ATCC 51521 / SW) protein is Large ribosomal subunit protein uL6.